Consider the following 203-residue polypeptide: Sarcosine oxidase subunit gamma (203 aa).

Belongs to the SoxG family. In terms of assembly, heterotetramer composed of subunits alpha (SoxA), beta (SoxB), gamma (SoxG) and delta (SoxD).

The protein resides in the cytoplasm. The catalysed reaction is sarcosine + (6S)-5,6,7,8-tetrahydrofolate + O2 = (6R)-5,10-methylene-5,6,7,8-tetrahydrofolate + glycine + H2O2. It catalyses the reaction sarcosine + O2 + H2O = formaldehyde + glycine + H2O2. In the presence of tetrahydrofolate, catalyzes the oxidative demethylation of sarcosine to yield glycine, 5,10-methylenetetrahydrofolate and hydrogen peroxide. In the absence of tetrahydrofolate, catalyzes the oxidative demethylation of sarcosine to yield glycine, formaldehyde and hydrogen peroxide. This is Sarcosine oxidase subunit gamma (soxG) from Arthrobacter sp.